Here is a 238-residue protein sequence, read N- to C-terminus: MRHLHHQTSQTKLWAVIPAAGSGSRFSKTELKQYQYIQDATVIEHTVKRLSQLPLTGYVLAIGKQDTFASTLSFQDKHKAHFCNGGVERVHSVLNALNYLSQIADEDDWVLVHDAARPCVTFECLNTLVKNAIETNQSAILAIPVRDTLKQVNQEQQIDKTVSRELLWQAQTPQIAKIGILKKAIETALKNNLTITDEASALESIGESVLVVMGRSDNIKITYPDDLELARLILQSQN.

It belongs to the IspD/TarI cytidylyltransferase family. IspD subfamily.

It catalyses the reaction 2-C-methyl-D-erythritol 4-phosphate + CTP + H(+) = 4-CDP-2-C-methyl-D-erythritol + diphosphate. Its pathway is isoprenoid biosynthesis; isopentenyl diphosphate biosynthesis via DXP pathway; isopentenyl diphosphate from 1-deoxy-D-xylulose 5-phosphate: step 2/6. Catalyzes the formation of 4-diphosphocytidyl-2-C-methyl-D-erythritol from CTP and 2-C-methyl-D-erythritol 4-phosphate (MEP). This Acinetobacter baumannii (strain ACICU) protein is 2-C-methyl-D-erythritol 4-phosphate cytidylyltransferase.